The chain runs to 207 residues: Ribosomal RNA small subunit methyltransferase G (207 aa).

S-adenosyl-L-methionine-binding positions include Gly-74, Leu-79, 125-126 (VE), and Arg-140.

The protein belongs to the methyltransferase superfamily. RNA methyltransferase RsmG family.

It is found in the cytoplasm. The catalysed reaction is guanosine(527) in 16S rRNA + S-adenosyl-L-methionine = N(7)-methylguanosine(527) in 16S rRNA + S-adenosyl-L-homocysteine. Its function is as follows. Specifically methylates the N7 position of guanine in position 527 of 16S rRNA. This chain is Ribosomal RNA small subunit methyltransferase G, found in Shewanella piezotolerans (strain WP3 / JCM 13877).